We begin with the raw amino-acid sequence, 2671 residues long: Stalled ribosome sensor GCN1 (2671 aa).

Alanine 2 is modified (N-acetylalanine). HEAT repeat units lie at residues 140-178, 257-293, 294-331, 385-423, 425-459, 460-503, 560-597, 599-636, 697-732, and 733-770; these read NKLV…ENPG, EFKD…LDLS, QYAM…QCSD, IVAE…EVPK, LTEW…GDTL, LQAL…SVAD, NKVQ…SLGG, KLAH…AGKA, DPEA…SLSV, and LSPD…QTPA. Residue serine 729 is modified to Phosphoserine. Serine 786 is modified (phosphoserine). Positions 804-863 form a coiled coil; that stretch reads QIIELELKEEIKKKKGIKEEVQLTSKQKEMLQAQLDREAQVRRRLQELDGELEAALGLLD. HEAT repeat units follow at residues 879–925, 979–1016, 1035–1072, 1078–1115, 1155–1192, 1210–1250, 1251–1289, 1290–1332, 1335–1372, 1374–1410, 1413–1451, 1455–1492, 1493–1530, 1534–1571, 1573–1609, 1611–1648, 1653–1690, 1692–1729, 1731–1769, 1773–1810, 1812–1848, 1921–1958, 1959–1996, 2001–2038, 2039–2076, 2078–2106, 2107–2146, 2147–2184, 2188–2225, 2259–2296, 2301–2338, 2339–2380, 2382–2417, 2422–2459, 2546–2583, and 2588–2625; these read VLVD…HVTL, SLVF…QAQL, LPRV…SSSG, FAEQ…VLPA, DLQP…RYQR, YRPP…YLDS, SQVK…THGK, ENVN…HLDK, PKVK…AIKE, AGGM…GLGI, LKQQ…MLGK, PYVV…NLSA, HGVK…CAPK, SCLP…VIRN, EILA…HFID, PSLA…LTDQ, PYLP…GMGE, CFED…GLGV, KLEK…TFGD, PYVG…MYAE, AIAL…HISG, EILP…KLGE, KILP…STSR, YFSE…TIGH, QALE…SRVV, PYLV…DALT, RHLG…VEDD, TGHR…RSKA, SHLR…KLDA, KGVT…LTSA, PSVV…AKVG, IALK…IHIK, DPLF…GAGA, VIRK…FLTE, QLPA…DPLP, and QAIK…MRQG. The tract at residues 2260-2408 is RWDBD region; that stretch reads GVTSILPVLR…GVRDTMLQAL (149 aa). Serine 2276 is subject to Phosphoserine. The HEAT 47; degenerate repeat unit spans residues 2627–2661; it reads EVFQSLSKILDVASLEVLNEVNRRSLKKLASQADS.

It belongs to the GCN1 family. Interacts with EIF2AK4/GCN2; this interaction stimulates the EIF2AK4/GCN2 kinase activity and is impaired by IMPACT upon a variety of stress conditions, such as amino acid depletion, UV-C irradiation, proteasome inhibitor treatment and glucose deprivation. Interacts with IMPACT; this prevents the interaction of GCN1 with EIF2AK4/GCN2 and inhibits EIF2AK4/GCN2 kinase activity. Interacts with RNF14; interaction takes place following ribosome stalling and promotes recruitment of RNF14. As to expression, ubiquitously expressed. Expressed in skeletal muscules, ovary and testis.

It is found in the cytoplasm. Functionally, ribosome collision sensor that plays a key role in the RNF14-RNF25 translation quality control pathway, a pathway that takes place when a ribosome has stalled during translation, and which promotes ubiquitination and degradation of translation factors on stalled ribosomes. Directly binds to the ribosome and acts as a sentinel for colliding ribosomes: activated following ribosome stalling and promotes recruitment of RNF14, which directly ubiquitinates EEF1A1/eEF1A, leading to its degradation. In addition to EEF1A1/eEF1A, the RNF14-RNF25 translation quality control pathway mediates degradation of ETF1/eRF1 and ubiquitination of ribosomal protein. GCN1 also acts as a positive activator of the integrated stress response (ISR) by mediating activation of EIF2AK4/GCN2 in response to amino acid starvation. Interaction with EIF2AK4/GCN2 on translating ribosomes stimulates EIF2AK4/GCN2 kinase activity, leading to phosphorylation of eukaryotic translation initiation factor 2 (eIF-2-alpha/EIF2S1). EIF2S1/eIF-2-alpha phosphorylation converts EIF2S1/eIF-2-alpha into a global protein synthesis inhibitor, leading to a global attenuation of cap-dependent translation, and thus to a reduced overall utilization of amino acids, while concomitantly initiating the preferential translation of ISR-specific mRNAs, such as the transcriptional activator ATF4, and hence allowing ATF4-mediated reprogramming of amino acid biosynthetic gene expression to alleviate nutrient depletion. This is Stalled ribosome sensor GCN1 from Homo sapiens (Human).